The primary structure comprises 452 residues: Type II methyltransferase M.EcaI (452 aa).

It belongs to the N(4)/N(6)-methyltransferase family.

The enzyme catalyses a 2'-deoxyadenosine in DNA + S-adenosyl-L-methionine = an N(6)-methyl-2'-deoxyadenosine in DNA + S-adenosyl-L-homocysteine + H(+). In terms of biological role, a beta subtype methylase, recognizes the double-stranded sequence 5'-GGTNACC-3', methylates A-5 on both strands and protects the DNA from cleavage by the EcaI endonuclease. The chain is Type II methyltransferase M.EcaI (ecaIM) from Enterobacter cloacae.